The sequence spans 108 residues: uncharacterized protein (108 aa).

Residue Gly2 is the site of N-myristoyl glycine; by host attachment.

This is an uncharacterized protein from Acanthamoeba polyphaga (Amoeba).